The primary structure comprises 567 residues: Proline--tRNA ligase (567 aa).

It belongs to the class-II aminoacyl-tRNA synthetase family. ProS type 1 subfamily. As to quaternary structure, homodimer.

It localises to the cytoplasm. It catalyses the reaction tRNA(Pro) + L-proline + ATP = L-prolyl-tRNA(Pro) + AMP + diphosphate. Functionally, catalyzes the attachment of proline to tRNA(Pro) in a two-step reaction: proline is first activated by ATP to form Pro-AMP and then transferred to the acceptor end of tRNA(Pro). As ProRS can inadvertently accommodate and process non-cognate amino acids such as alanine and cysteine, to avoid such errors it has two additional distinct editing activities against alanine. One activity is designated as 'pretransfer' editing and involves the tRNA(Pro)-independent hydrolysis of activated Ala-AMP. The other activity is designated 'posttransfer' editing and involves deacylation of mischarged Ala-tRNA(Pro). The misacylated Cys-tRNA(Pro) is not edited by ProRS. This is Proline--tRNA ligase from Fusobacterium nucleatum subsp. nucleatum (strain ATCC 25586 / DSM 15643 / BCRC 10681 / CIP 101130 / JCM 8532 / KCTC 2640 / LMG 13131 / VPI 4355).